We begin with the raw amino-acid sequence, 196 residues long: Pyridoxal 5'-phosphate synthase subunit PdxT (196 aa).

47–49 (GES) contributes to the L-glutamine binding site. The Nucleophile role is filled by cysteine 79. L-glutamine contacts are provided by residues arginine 106 and 134–135 (IR). Residues histidine 170 and glutamate 172 each act as charge relay system in the active site.

It belongs to the glutaminase PdxT/SNO family. In the presence of PdxS, forms a dodecamer of heterodimers. Only shows activity in the heterodimer.

It catalyses the reaction aldehydo-D-ribose 5-phosphate + D-glyceraldehyde 3-phosphate + L-glutamine = pyridoxal 5'-phosphate + L-glutamate + phosphate + 3 H2O + H(+). The enzyme catalyses L-glutamine + H2O = L-glutamate + NH4(+). It participates in cofactor biosynthesis; pyridoxal 5'-phosphate biosynthesis. Functionally, catalyzes the hydrolysis of glutamine to glutamate and ammonia as part of the biosynthesis of pyridoxal 5'-phosphate. The resulting ammonia molecule is channeled to the active site of PdxS. This chain is Pyridoxal 5'-phosphate synthase subunit PdxT, found in Bacillus pumilus (strain SAFR-032).